The sequence spans 103 residues: Small ribosomal subunit protein uS10 (103 aa).

Belongs to the universal ribosomal protein uS10 family. Part of the 30S ribosomal subunit.

Its function is as follows. Involved in the binding of tRNA to the ribosomes. The sequence is that of Small ribosomal subunit protein uS10 from Alkalilimnicola ehrlichii (strain ATCC BAA-1101 / DSM 17681 / MLHE-1).